The sequence spans 167 residues: Urease accessory protein UreE (167 aa).

The segment at 135 to 167 is disordered; it reads SGAYGGGHHHSHSHHEGDEFHSKPRLHHFGGSQ. The segment covering 157-167 has biased composition (basic residues); the sequence is KPRLHHFGGSQ.

It belongs to the UreE family.

It localises to the cytoplasm. Involved in urease metallocenter assembly. Binds nickel. Probably functions as a nickel donor during metallocenter assembly. The chain is Urease accessory protein UreE from Nitrosococcus oceani (strain ATCC 19707 / BCRC 17464 / JCM 30415 / NCIMB 11848 / C-107).